A 351-amino-acid polypeptide reads, in one-letter code: Protein RecA (351 aa).

G67–T74 lines the ATP pocket.

It belongs to the RecA family.

Its subcellular location is the cytoplasm. Its function is as follows. Can catalyze the hydrolysis of ATP in the presence of single-stranded DNA, the ATP-dependent uptake of single-stranded DNA by duplex DNA, and the ATP-dependent hybridization of homologous single-stranded DNAs. It interacts with LexA causing its activation and leading to its autocatalytic cleavage. This chain is Protein RecA, found in Mannheimia succiniciproducens (strain KCTC 0769BP / MBEL55E).